The primary structure comprises 503 residues: Lithocholate 6-beta-hydroxylase (503 aa).

A heme-binding site is contributed by Cys442.

The protein belongs to the cytochrome P450 family. Heme is required as a cofactor.

It localises to the endoplasmic reticulum membrane. The protein localises to the microsome membrane. The catalysed reaction is lithocholate + reduced [NADPH--hemoprotein reductase] + O2 = 6beta-hydroxylithocholate + oxidized [NADPH--hemoprotein reductase] + H2O + H(+). Functionally, catalyzes the 6 beta-hydroxylation of lithocholic acid and steroid hormones. The polypeptide is Lithocholate 6-beta-hydroxylase (CYP3A10) (Mesocricetus auratus (Golden hamster)).